The primary structure comprises 464 residues: Chitobiosyldiphosphodolichol beta-mannosyltransferase (464 aa).

The Lumenal portion of the chain corresponds to 1–2 (MA). A helical membrane pass occupies residues 3–23 (ASCLVLLALCLLLPLLLLGGW). The Cytoplasmic segment spans residues 24 to 99 (KRWRRGRTAR…ELQSLAVGPR (76 aa)). The segment at residues 100-120 (VFQYGVKVVFQAMYLLWKLMW) is an intramembrane region (helical). Residues 121–464 (REPGAYIFLQ…QTVLPLVMDT (344 aa)) lie on the Cytoplasmic side of the membrane. Phosphoserine is present on S242. Positions 242–261 (SPFRARSEPEDPATERSAFT) are disordered.

The protein belongs to the glycosyltransferase group 1 family. Glycosyltransferase 33 subfamily.

The protein resides in the endoplasmic reticulum membrane. It carries out the reaction an N,N'-diacetylchitobiosyl-diphospho-di-trans,poly-cis-dolichol + GDP-alpha-D-mannose = a beta-D-Man-(1-&gt;4)-beta-D-GlcNAc-(1-&gt;4)-alpha-D-GlcNAc-diphospho-di-trans,poly-cis-dolichol + GDP + H(+). It participates in protein modification; protein glycosylation. Its function is as follows. Mannosyltransferase that operates in the biosynthetic pathway of dolichol-linked oligosaccharides, the glycan precursors employed in protein asparagine (N)-glycosylation. The assembly of dolichol-linked oligosaccharides begins on the cytosolic side of the endoplasmic reticulum membrane and finishes in its lumen. The sequential addition of sugars to dolichol pyrophosphate produces dolichol-linked oligosaccharides containing fourteen sugars, including two GlcNAcs, nine mannoses and three glucoses. Once assembled, the oligosaccharide is transferred from the lipid to nascent proteins by oligosaccharyltransferases. Catalyzes, on the cytoplasmic face of the endoplasmic reticulum, the addition of the first mannose residues to the dolichol-linked oligosaccharide chain, to produce Man1GlcNAc(2)-PP-dolichol core oligosaccharide. Man1GlcNAc(2)-PP-dolichol is a substrate for ALG2, the following enzyme in the biosynthetic pathway. This is Chitobiosyldiphosphodolichol beta-mannosyltransferase from Pongo abelii (Sumatran orangutan).